Here is a 246-residue protein sequence, read N- to C-terminus: MLRTARFLQRSISATSRPNCIVQPQRTSATCPRSFILQHTEATSDPLTPEIRLRLLTPRCDFWRQKPELWPYGDPYWAIYWPGGQALSRFLLDNPQIVRGGRVLDLGCGCGAAAIAAWMGGASYVLANDIDPVAGEAFRLNCELNNMKPLDFQAENLIGRETGPWSLIVLGDMFYDAELADLLCDWLRRSIRSHGTKVLIGDPGRAQFSSHPVLRHLQPLAQYSLSDSTKEENYGLTDSTVWSFEP.

This sequence belongs to the methyltransferase superfamily. ETFBKMT family.

The protein resides in the cytoplasm. It localises to the mitochondrion matrix. The enzyme catalyses L-lysyl-[protein] + 3 S-adenosyl-L-methionine = N(6),N(6),N(6)-trimethyl-L-lysyl-[protein] + 3 S-adenosyl-L-homocysteine + 3 H(+). Protein-lysine methyltransferase that selectively trimethylates the flavoprotein ETFB in mitochondria. Thereby, may negatively regulate the function of ETFB in electron transfer from Acyl-CoA dehydrogenases to the main respiratory chain. The protein is Electron transfer flavoprotein beta subunit lysine methyltransferase (etfbkmt) of Xenopus laevis (African clawed frog).